A 700-amino-acid chain; its full sequence is Elongation factor G (700 aa).

One can recognise a tr-type G domain in the interval 8-290 (DKYRNIGISA…AVVELLPSPL (283 aa)). Residues 17-24 (AHIDAGKT), 88-92 (DTPGH), and 142-145 (NKMD) each bind GTP.

The protein belongs to the TRAFAC class translation factor GTPase superfamily. Classic translation factor GTPase family. EF-G/EF-2 subfamily.

The protein resides in the cytoplasm. Its function is as follows. Catalyzes the GTP-dependent ribosomal translocation step during translation elongation. During this step, the ribosome changes from the pre-translocational (PRE) to the post-translocational (POST) state as the newly formed A-site-bound peptidyl-tRNA and P-site-bound deacylated tRNA move to the P and E sites, respectively. Catalyzes the coordinated movement of the two tRNA molecules, the mRNA and conformational changes in the ribosome. This chain is Elongation factor G, found in Polynucleobacter necessarius subsp. necessarius (strain STIR1).